Here is a 669-residue protein sequence, read N- to C-terminus: MDFPGAARLLSLLLVPLLLGPARGLRNASQRTFKIDYGHNRFLKDGQPFRYISGSIHYFRVPRFYWKDRLLKMKMAGLNAIQTYVPWNFHEPQPGQYQFSGEHDVEYFLKLAHELGLLVILRPGPYICAEWDMGGLPAWLLLKESIILRSSDPDYLAAVDKWLGVLLPKMKPLLYQNGGPIITVQVENEYGSYFTCDYDYLRFLQRRFRDHLGGDVLLFTTDGAHEKFLQCGALQGIYATVDFGPDANITAAFQIQRKSEPRGPLVNSEFYTGWLDHWGQPHSRVRTEVVASSLHDVLAHGANVNLYMFIGGTNFAYWNGANIPYQPQPTSYDYDAPLSEAGDLTDKYFALRDVIRKFEKVPEGFIPPSTPKFAYGKVALQKLKTVEDALNVLCPAGPIKSLYPLTFIQVKQYFGFVLYRTTLPQDCSNPTPLSSPLNGVRDRAYVAVDGVPQGVLERSYVITLNITGQAGATLDLLVENMGRVNYGRYINDFKGLISNLTLGSSVLTDWMIFPLDTEDAVRSHLGGWHGRNHGRQDNKAFAHHSSNYTLPAFYAGNFSIPSGIPDLPQDTFIQFSGWTKGQVWINGFNLGRYWPGRGPQVTLFVPRHILVTSAPNTIMVLELERAPCDDNGPELCTVEFVDRPLISATPTSSHPLPDLSDRDSGWDRV.

The first 24 residues, 1 to 24 (MDFPGAARLLSLLLVPLLLGPARG), serve as a signal peptide directing secretion. A propeptide spanning residues 25-29 (LRNAS) is cleaved from the precursor. Asn27 carries N-linked (GlcNAc...) asparagine glycosylation. The substrate site is built by Tyr84, Glu130, and Asn188. The active-site Proton donor is Glu189. Cys196 and Cys231 are oxidised to a cystine. N-linked (GlcNAc...) asparagine glycosylation is present at Asn248. Glu269 acts as the Nucleophile in catalysis. Residue Tyr334 participates in substrate binding. N-linked (GlcNAc...) asparagine glycans are attached at residues Asn465, Asn499, Asn547, and Asn557. A disulfide bridge links Cys628 with Cys636. Residues 649 to 669 (TPTSSHPLPDLSDRDSGWDRV) are disordered. Basic and acidic residues predominate over residues 659–669 (LSDRDSGWDRV).

It belongs to the glycosyl hydrolase 35 family. In terms of assembly, homodimer. May form higher multimers.

The protein localises to the lysosome. It catalyses the reaction Hydrolysis of terminal non-reducing beta-D-galactose residues in beta-D-galactosides.. Its function is as follows. Cleaves beta-linked terminal galactosyl residues from gangliosides, glycoproteins, and glycosaminoglycans. In Felis catus (Cat), this protein is Beta-galactosidase (GLB1).